We begin with the raw amino-acid sequence, 369 residues long: MVALLFAGAFSLAFTLFLTPLFIKLFHRLQWGQFIRDDGPQTHHTKRGTATMGGIVIILASVLGYFVGHLLTWDGIRFDPVTPSGLLVVFMMVGLGFVGFLDDYLKTRKQQSLGLGGWQKIAGQVVVATVFAVLAITLRDPVSGLTPASTAISLFRDLPLDFMALGAVIGTGLFIVWICLIVASASNGVNVADGLDGLAAGASIFSIGSYVIIGFWQFNQSCDSVSSYQNEYRCYEVASPLDLAIIAASIVGALIGFLWWNTSPAQIFMGDTGSLGLGGALAALAILSRTELLLVFIGGLFVIVAGSVVLQRIYFKLTHGKRIFLMSPLHHHFELKGWAEVTVVVRFWIIAGLLVAAGVGTFYLEWITQ.

The next 10 helical transmembrane spans lie at 3–23 (ALLFAGAFSLAFTLFLTPLFI), 53–73 (GGIVIILASVLGYFVGHLLTW), 81–101 (VTPSGLLVVFMMVGLGFVGFL), 118–138 (WQKIAGQVVVATVFAVLAITL), 162–182 (FMALGAVIGTGLFIVWICLIV), 198–218 (LAAGASIFSIGSYVIIGFWQF), 240–260 (PLDLAIIAASIVGALIGFLWW), 267–287 (IFMGDTGSLGLGGALAALAIL), 290–310 (TELLLVFIGGLFVIVAGSVVL), and 347–367 (FWIIAGLLVAAGVGTFYLEWI).

Belongs to the glycosyltransferase 4 family. MraY subfamily. Mg(2+) is required as a cofactor.

The protein localises to the cell membrane. It carries out the reaction UDP-N-acetyl-alpha-D-muramoyl-L-alanyl-gamma-D-glutamyl-meso-2,6-diaminopimeloyl-D-alanyl-D-alanine + di-trans,octa-cis-undecaprenyl phosphate = di-trans,octa-cis-undecaprenyl diphospho-N-acetyl-alpha-D-muramoyl-L-alanyl-D-glutamyl-meso-2,6-diaminopimeloyl-D-alanyl-D-alanine + UMP. It participates in cell wall biogenesis; peptidoglycan biosynthesis. Its function is as follows. Catalyzes the initial step of the lipid cycle reactions in the biosynthesis of the cell wall peptidoglycan: transfers peptidoglycan precursor phospho-MurNAc-pentapeptide from UDP-MurNAc-pentapeptide onto the lipid carrier undecaprenyl phosphate, yielding undecaprenyl-pyrophosphoryl-MurNAc-pentapeptide, known as lipid I. This chain is Phospho-N-acetylmuramoyl-pentapeptide-transferase, found in Clavibacter michiganensis subsp. michiganensis (strain NCPPB 382).